Consider the following 124-residue polypeptide: Multifunctional methyltransferase subunit TRM112 homolog A (124 aa).

One can recognise a TRM112 domain in the interval arginine 2–histidine 120.

Belongs to the TRM112 family. In terms of assembly, interacts with TRM9.

Its function is as follows. Acts as an activator of both rRNA/tRNA and protein methyltransferases. Required for TRM9 tRNA methyltransferase activity. Involved in the regulation of cell division progression during organ growth. Required for the expression of cell cycle-related genes, and the G2-M phase progression during organogenesis. This chain is Multifunctional methyltransferase subunit TRM112 homolog A, found in Arabidopsis thaliana (Mouse-ear cress).